The chain runs to 335 residues: Galactosylgalactosylxylosylprotein 3-beta-glucuronosyltransferase 3 (335 aa).

Over 1 to 7 the chain is Cytoplasmic; the sequence is MKLKLKN. The helical; Signal-anchor for type II membrane protein transmembrane segment at 8-28 threads the bilayer; that stretch reads VFLAYFLVSIAGLLYALVQLG. At 29-335 the chain is on the lumenal side; that stretch reads QPCDCLPPLR…GQGSDPAIEV (307 aa). Residues 82–84, Asp-113, Arg-156, Arg-161, and 194–196 each bind UDP-alpha-D-glucuronate; these read PTY and DDD. Residue Asp-196 coordinates Mn(2+). Residues 243-252 form an interaction with galactose moiety of substrate glycoprotein region; sequence WEPNRPFPLD. Glu-281 acts as the Proton donor/acceptor in catalysis. Asn-300 is a glycosylation site (N-linked (GlcNAc...) asparagine). 308–310 is a UDP-alpha-D-glucuronate binding site; that stretch reads HTR. Over residues 312–322 the composition is skewed to basic and acidic residues; that stretch reads EKPKMKQEEQL. Residues 312–335 are disordered; it reads EKPKMKQEEQLQRQGQGSDPAIEV.

This sequence belongs to the glycosyltransferase 43 family. As to quaternary structure, homodimer; disulfide-linked. Interacts with PXYLP1; the interaction increases the 2-phosphoxylose phosphatase activity of PXYLP1 during completion of linkage region formation in a B3GAT3-mediated manner. Requires Mn(2+) as cofactor. N-glycosylated. In terms of tissue distribution, expressed in heart, aorta, bone, and also in osteoblasts.

The protein resides in the golgi apparatus membrane. Its subcellular location is the golgi apparatus. It is found in the cis-Golgi network. It carries out the reaction 3-O-(beta-D-galactosyl-(1-&gt;3)-beta-D-galactosyl-(1-&gt;4)-beta-D-xylosyl)-L-seryl-[protein] + UDP-alpha-D-glucuronate = 3-O-(beta-D-GlcA-(1-&gt;3)-beta-D-Gal-(1-&gt;3)-beta-D-Gal-(1-&gt;4)-beta-D-Xyl)-L-seryl-[protein] + UDP + H(+). It participates in protein modification; protein glycosylation. Glycosaminoglycans biosynthesis. Involved in forming the linkage tetrasaccharide present in heparan sulfate and chondroitin sulfate. Transfers a glucuronic acid moiety from the uridine diphosphate-glucuronic acid (UDP-GlcUA) to the common linkage region trisaccharide Gal-beta-1,3-Gal-beta-1,4-Xyl covalently bound to a Ser residue at the glycosaminylglycan attachment site of proteoglycans. Can also play a role in the biosynthesis of l2/HNK-1 carbohydrate epitope on glycoproteins. Stimulates 2-phosphoxylose phosphatase activity of PXYLP1 in presence of uridine diphosphate-glucuronic acid (UDP-GlcUA) during completion of linkage region formation. In Mus musculus (Mouse), this protein is Galactosylgalactosylxylosylprotein 3-beta-glucuronosyltransferase 3 (B3gat3).